A 75-amino-acid chain; its full sequence is uncharacterized protein (75 aa).

2 helical membrane passes run 7–26 and 36–58; these read LINA…AASA and MHLF…FCPV.

The protein resides in the cell membrane. This is an uncharacterized protein from Bacillus subtilis (strain 168).